Consider the following 321-residue polypeptide: MTAQSQNIVETPSRVRAHALGVNAPELAKYQDEPAQMRSGAVGKSGYLKLRFAKREHRSILAEMERRVPSLVQKALYWDEEIPELPCVTMISTSGCILQGDRLATDVHVEAGACAHVTTQSATKVHMMNANYASQIQNFIVEEGGYLEFMPDPLIPHRNSRFITDTTISIHPTATAIYSEVLMSGRKYHHADERFGFDVYSSRVAAQNLAGKELFVEKYVLEPKVESLDAVGVMQTFDAFGNVILLTPKEHHDRILARVPAHFDIKGGIASGATRLPNDCGLVFKALGIDSAGVKAEIRQFWKIAREEILGVTLPEQFLWR.

It belongs to the UreD family. UreD, UreF and UreG form a complex that acts as a GTP-hydrolysis-dependent molecular chaperone, activating the urease apoprotein by helping to assemble the nickel containing metallocenter of UreC. The UreE protein probably delivers the nickel.

The protein localises to the cytoplasm. In terms of biological role, required for maturation of urease via the functional incorporation of the urease nickel metallocenter. This chain is Urease accessory protein UreD, found in Yersinia pseudotuberculosis serotype O:1b (strain IP 31758).